Reading from the N-terminus, the 208-residue chain is Probable Brix domain-containing ribosomal biogenesis protein (208 aa).

The Brix domain maps to Met1–Trp196.

In terms of biological role, probably involved in the biogenesis of the ribosome. The chain is Probable Brix domain-containing ribosomal biogenesis protein from Thermococcus kodakarensis (strain ATCC BAA-918 / JCM 12380 / KOD1) (Pyrococcus kodakaraensis (strain KOD1)).